Consider the following 716-residue polypeptide: ATP-dependent DNA helicase DinG (716 aa).

A Helicase ATP-binding domain is found at 17 to 294; the sequence is ALQEQIPDFI…TCMEQFRPKT (278 aa). 54–61 contacts ATP; sequence APTGVGKT. C120 contacts [4Fe-4S] cluster. The DEAH box signature appears at 131 to 134; the sequence is EPTQ. 3 residues coordinate [4Fe-4S] cluster: C194, C199, and C205. The DEAH box signature appears at 248–251; that stretch reads DEGH. The region spanning 517–698 is the Helicase C-terminal domain; the sequence is HIAEMAAFFR…VFPIEQPEVP (182 aa).

This sequence belongs to the helicase family. DinG subfamily. Type 1 sub-subfamily. [4Fe-4S] cluster is required as a cofactor.

The enzyme catalyses Couples ATP hydrolysis with the unwinding of duplex DNA at the replication fork by translocating in the 5'-3' direction. This creates two antiparallel DNA single strands (ssDNA). The leading ssDNA polymer is the template for DNA polymerase III holoenzyme which synthesizes a continuous strand.. It carries out the reaction ATP + H2O = ADP + phosphate + H(+). Its function is as follows. DNA-dependent ATPase and 5'-3' DNA helicase. Unwinds D-loops, R-loops, forked DNA and G-quadruplex DNA. The polypeptide is ATP-dependent DNA helicase DinG (Escherichia coli O157:H7).